The chain runs to 361 residues: MTQIFNFSAGPAMLPVEVLRRAEQELCNWNGLGTSVMEISHRSKEFMQVAAESEQDLRDLLKIPSNYKVLFCHGGARAQFAAVPLNLLGERSTADYIDGGYWAHSAINEAEKYCTPNVIDVKTRIDDLRGIKPMREWKLSDDAAFVHYCPNETIDGIAIEEEPDFGDKIVVADYSSSILSRRIDVSRYGVIYAGAQKNIGPAGLTLVIVREDLLGKARRELPSILDYQVLADNDSMFNTPPTFAWYLSGMVFKWLKEHGGLAEMEKRNQEKADLLYSAIDGNDFYRNDVALANRSRMNVPFLLADSALDKVFLEESVAAGLHALKGHRVVGGMRASIYNAMPLEGVKALTEFMADFARRHG.

Residue arginine 42 participates in L-glutamate binding. Pyridoxal 5'-phosphate is bound by residues 76–77 (AR), tryptophan 102, threonine 153, aspartate 173, and glutamine 196. Residue lysine 197 is modified to N6-(pyridoxal phosphate)lysine. Residue 238–239 (NT) participates in pyridoxal 5'-phosphate binding.

This sequence belongs to the class-V pyridoxal-phosphate-dependent aminotransferase family. SerC subfamily. As to quaternary structure, homodimer. The cofactor is pyridoxal 5'-phosphate.

Its subcellular location is the cytoplasm. It catalyses the reaction O-phospho-L-serine + 2-oxoglutarate = 3-phosphooxypyruvate + L-glutamate. It carries out the reaction 4-(phosphooxy)-L-threonine + 2-oxoglutarate = (R)-3-hydroxy-2-oxo-4-phosphooxybutanoate + L-glutamate. The protein operates within amino-acid biosynthesis; L-serine biosynthesis; L-serine from 3-phospho-D-glycerate: step 2/3. Its pathway is cofactor biosynthesis; pyridoxine 5'-phosphate biosynthesis; pyridoxine 5'-phosphate from D-erythrose 4-phosphate: step 3/5. Functionally, catalyzes the reversible conversion of 3-phosphohydroxypyruvate to phosphoserine and of 3-hydroxy-2-oxo-4-phosphonooxybutanoate to phosphohydroxythreonine. This is Phosphoserine aminotransferase from Pectobacterium atrosepticum (strain SCRI 1043 / ATCC BAA-672) (Erwinia carotovora subsp. atroseptica).